The chain runs to 451 residues: Protein SAR DEFICIENT 1 (451 aa).

The segment at 149–270 is DNA-binding; sequence DKWTSDEFES…AFHKKLSSRH (122 aa).

The protein belongs to the plant ACBP60 protein family. In terms of assembly, (Microbial infection) Interacts with V.dahliae SCP41.

The protein localises to the nucleus. Transcription activator that binds DNA in a sequence-specific manner, 5'-GAAATTTTGG-3', to promote the expression of target genes. Recruited to the promoter of ICS1 and other defense-related genes (e.g. PR1 and SID2) in response to both biotic (e.g. Pseudomonas syringae pv. maculicola ES4326) and abiotic stresses (e.g. UV-B), thus triggering slow defense responses by stimulating salicylic acid (SA) biosynthesis. Required for basal and systemic acquired resistance to P.syringae pv. maculicola and Hyaloperonospora arabidopsidis. This is Protein SAR DEFICIENT 1 from Arabidopsis thaliana (Mouse-ear cress).